Here is a 392-residue protein sequence, read N- to C-terminus: Selenide, water dikinase 1 (392 aa).

Position 2 is an N-acetylserine (serine 2). Residue cysteine 31 is part of the active site. ATP-binding positions include lysine 32, 67 to 69 (GMD), aspartate 87, aspartate 110, and 161 to 164 (GGQT). Aspartate 69 provides a ligand contact to Mg(2+). Mg(2+) is bound at residue aspartate 110. Residue aspartate 265 participates in Mg(2+) binding.

The protein belongs to the selenophosphate synthase 1 family. Class II subfamily. Homodimer. The cofactor is Mg(2+).

It localises to the cell membrane. The protein resides in the nucleus membrane. The catalysed reaction is hydrogenselenide + ATP + H2O = selenophosphate + AMP + phosphate + 2 H(+). Synthesizes selenophosphate from selenide and ATP. The chain is Selenide, water dikinase 1 (Sephs1) from Mus musculus (Mouse).